The primary structure comprises 91 residues: Small ribosomal subunit protein uS19 (91 aa).

It belongs to the universal ribosomal protein uS19 family.

Its function is as follows. Protein S19 forms a complex with S13 that binds strongly to the 16S ribosomal RNA. The polypeptide is Small ribosomal subunit protein uS19 (Prochlorococcus marinus (strain MIT 9515)).